The following is a 361-amino-acid chain: 3-dehydroquinate synthase (361 aa).

NAD(+) is bound by residues 107 to 111 (GVIGD), 131 to 132 (TS), lysine 144, and lysine 153. Zn(2+)-binding residues include glutamate 186, histidine 251, and histidine 268.

Belongs to the sugar phosphate cyclases superfamily. Dehydroquinate synthase family. Requires NAD(+) as cofactor. It depends on Co(2+) as a cofactor. Zn(2+) serves as cofactor.

It is found in the cytoplasm. It catalyses the reaction 7-phospho-2-dehydro-3-deoxy-D-arabino-heptonate = 3-dehydroquinate + phosphate. It functions in the pathway metabolic intermediate biosynthesis; chorismate biosynthesis; chorismate from D-erythrose 4-phosphate and phosphoenolpyruvate: step 2/7. Its function is as follows. Catalyzes the conversion of 3-deoxy-D-arabino-heptulosonate 7-phosphate (DAHP) to dehydroquinate (DHQ). The chain is 3-dehydroquinate synthase from Synechocystis sp. (strain ATCC 27184 / PCC 6803 / Kazusa).